The chain runs to 140 residues: Nucleoside diphosphate kinase (140 aa).

6 residues coordinate ATP: Lys-9, Phe-57, Arg-85, Thr-91, Arg-102, and Asn-112. The active-site Pros-phosphohistidine intermediate is His-115.

The protein belongs to the NDK family. Homotetramer. Requires Mg(2+) as cofactor.

The protein resides in the cytoplasm. The enzyme catalyses a 2'-deoxyribonucleoside 5'-diphosphate + ATP = a 2'-deoxyribonucleoside 5'-triphosphate + ADP. It carries out the reaction a ribonucleoside 5'-diphosphate + ATP = a ribonucleoside 5'-triphosphate + ADP. Its function is as follows. Major role in the synthesis of nucleoside triphosphates other than ATP. The ATP gamma phosphate is transferred to the NDP beta phosphate via a ping-pong mechanism, using a phosphorylated active-site intermediate. The sequence is that of Nucleoside diphosphate kinase from Chlorobium luteolum (strain DSM 273 / BCRC 81028 / 2530) (Pelodictyon luteolum).